Here is a 466-residue protein sequence, read N- to C-terminus: MADFSDFHVADIALAGWGRKELNIAETEMPGLMATRDEYHAAQPLRGARIAGSLHMTVQTAVLIETLTALGAEVRWASCNIFSTQDHAAAAIAAAGIPVFAFKGESLDEYWEFSHKIFEWPEGQPANMILDDGGDATLLLMLGSKAEKDIGVIAHPTNEEETALFASIKRHLAIDPHWYSKRLEHIQGVTEETTTGVHRLYQLEKDGHLPFPAINVNDSVTKSKFDNLYGCRESLVDGIKRATDVMVAGKVAVVLGYGDVGKGCAQSLRGLGATVWVTEIDPICALQAAMEGYRVVRMDEVADQADIFVTATGNVGVITHEHMKKMRNNAIICNIGHFDSEIEVASLRQYQWENIKPQVDHIIFPDGKRVILLAEGRLVNLGCATGHPSFVMSNSFTNQVLAQIELFANGHKYEKKVYVLPKHLDEKVARLHLARIGARLTELSDQQAAYISVPKQGPYKPDHYRY.

Substrate-binding residues include Thr-57, Asp-132, and Glu-192. 193–195 (TTT) contacts NAD(+). Lys-222 and Asp-226 together coordinate substrate. NAD(+) contacts are provided by residues Asn-227, 256 to 261 (GYGDVG), Glu-279, Asn-314, 335 to 337 (IGH), and Asn-380.

It belongs to the adenosylhomocysteinase family. NAD(+) serves as cofactor.

It is found in the cytoplasm. The catalysed reaction is S-adenosyl-L-homocysteine + H2O = L-homocysteine + adenosine. It participates in amino-acid biosynthesis; L-homocysteine biosynthesis; L-homocysteine from S-adenosyl-L-homocysteine: step 1/1. May play a key role in the regulation of the intracellular concentration of adenosylhomocysteine. The sequence is that of Adenosylhomocysteinase from Chromobacterium violaceum (strain ATCC 12472 / DSM 30191 / JCM 1249 / CCUG 213 / NBRC 12614 / NCIMB 9131 / NCTC 9757 / MK).